A 346-amino-acid polypeptide reads, in one-letter code: Transposase for insertion sequence element IS1533 (346 aa).

Belongs to the transposase IS1111A/IS1328/IS1533 family.

In terms of biological role, required for the transposition of the insertion element. The polypeptide is Transposase for insertion sequence element IS1533 (tnhA) (Leptospira borgpetersenii).